The sequence spans 35 residues: MEALVYTFLLISTLGIIFFAIFFRDPPRISTKKMK.

Residues 3–23 (ALVYTFLLISTLGIIFFAIFF) form a helical membrane-spanning segment.

This sequence belongs to the PsbT family. PSII is composed of 1 copy each of membrane proteins PsbA, PsbB, PsbC, PsbD, PsbE, PsbF, PsbH, PsbI, PsbJ, PsbK, PsbL, PsbM, PsbT, PsbY, PsbZ, Psb30/Ycf12, at least 3 peripheral proteins of the oxygen-evolving complex and a large number of cofactors. It forms dimeric complexes.

The protein localises to the plastid. It is found in the chloroplast thylakoid membrane. Its function is as follows. Found at the monomer-monomer interface of the photosystem II (PS II) dimer, plays a role in assembly and dimerization of PSII. PSII is a light-driven water plastoquinone oxidoreductase, using light energy to abstract electrons from H(2)O, generating a proton gradient subsequently used for ATP formation. This chain is Photosystem II reaction center protein T, found in Aristolochia macrophylla (Dutchman's pipe vine).